We begin with the raw amino-acid sequence, 272 residues long: NH(3)-dependent NAD(+) synthetase (272 aa).

45 to 52 (GISGGQDS) lines the ATP pocket. D51 is a Mg(2+) binding site. Position 138 (R138) interacts with deamido-NAD(+). T158 contacts ATP. E163 provides a ligand contact to Mg(2+). Deamido-NAD(+)-binding residues include K171 and D178. ATP contacts are provided by K187 and T209. Position 258-259 (258-259 (HK)) interacts with deamido-NAD(+).

It belongs to the NAD synthetase family. In terms of assembly, homodimer.

It carries out the reaction deamido-NAD(+) + NH4(+) + ATP = AMP + diphosphate + NAD(+) + H(+). Its pathway is cofactor biosynthesis; NAD(+) biosynthesis; NAD(+) from deamido-NAD(+) (ammonia route): step 1/1. Catalyzes the ATP-dependent amidation of deamido-NAD to form NAD. Uses ammonia as a nitrogen source. The protein is NH(3)-dependent NAD(+) synthetase of Bacillus cereus (strain ATCC 10987 / NRS 248).